The chain runs to 539 residues: MSSTEVPGEVSTSVSSYFDTILILDFGSQYSHLIARRLREIHVYAELLPCTQKIEALPFKPIGVILSGGPYSVYDDIAPHVDPAVFELGVPVLGICYGMQEIAWLNGRCVEPGIEREYGPATVSMEPEIKTEVFKSFFNSMPKEFEVWMSHGDRLSALPNGYETIGRTKNSPFAVIAHVTKPIIGLQFHPEVTHTPLGLQLIKNFAIEICHAKPNWSMENFVDKEILRIRKMIGPSDHVIGAVSGGVDSTVASKVLKEAIGDRFHAIMVDNGLLRLNEAEIVRETLNKHLGIQLTVVDASEEFIGKLKGVTDPEKKRKIIGNTFIHVFEREAERIVKETNGKVEYLLQGTLYPDVIESISFKGPSQTIKTHHNVGGLLKDMKLKLIEPLRELFKDEVRALGELLGIEHSLVWRHPFPGPGLGIRILGEVNAAQLEIARKADHIFITEIRNHGYYDKISQAFAALLPVKAVGVMGDKRTHEQVIALRAITTSDFMTADWYDGFSIKFLKLVSSRICNEVSGVNRVLYDISSKPPATVEME.

One can recognise a Glutamine amidotransferase type-1 domain in the interval 20 to 215; that stretch reads TILILDFGSQ…AIEICHAKPN (196 aa). C96 acts as the Nucleophile in catalysis. Catalysis depends on residues H189 and E191. The 198-residue stretch at 216 to 413 folds into the GMPS ATP-PPase domain; the sequence is WSMENFVDKE…LGIEHSLVWR (198 aa). Residue 244-250 participates in ATP binding; it reads SGGVDST. R317, D475, K531, and E537 together coordinate XMP.

In terms of assembly, homodimer. Mg(2+) is required as a cofactor.

It localises to the cytoplasm. Its subcellular location is the cytosol. The catalysed reaction is XMP + L-glutamine + ATP + H2O = GMP + L-glutamate + AMP + diphosphate + 2 H(+). The protein operates within purine metabolism; GMP biosynthesis; GMP from XMP (L-Gln route): step 1/1. Its function is as follows. Catalyzes the conversion of xanthine monophosphate (XMP) to GMP in the presence of glutamine and ATP through an adenyl-XMP intermediate. The protein is GMP synthase [glutamine-hydrolyzing] of Schizosaccharomyces pombe (strain 972 / ATCC 24843) (Fission yeast).